The primary structure comprises 295 residues: MNYQWPSPGKLNLFLYVTGCRADGYHYLQTLFQLIEYGDTIKIFVTNNGRIRLFTIMNDLVCRDNLIIRAAKLLQYYCWPNKKPVFGADIFLDKILPIGSGLGGASSNAATVLMVLNQQWRCYLNKHVLMHLGLMLGADVPFFLYGRSAFAEGIGNILIPVFVPKKWYLILIPPVRISTFWGFQMYELENHCYSPFRSMRELLSVSFHNDFEEIIKKISPEIKIFFACLSQFALARLTGTGSCIFAEFKTEQLAYQVQSYLPSWVSSIITRGINLSPLHQKLLKCTAYSSIIFLS.

Lys-10 is a catalytic residue. 97–107 lines the ATP pocket; it reads PIGSGLGGASS. Asp-139 is an active-site residue.

It belongs to the GHMP kinase family. IspE subfamily. As to quaternary structure, homodimer.

The enzyme catalyses 4-CDP-2-C-methyl-D-erythritol + ATP = 4-CDP-2-C-methyl-D-erythritol 2-phosphate + ADP + H(+). The protein operates within isoprenoid biosynthesis; isopentenyl diphosphate biosynthesis via DXP pathway; isopentenyl diphosphate from 1-deoxy-D-xylulose 5-phosphate: step 3/6. Its function is as follows. Catalyzes the phosphorylation of the position 2 hydroxy group of 4-diphosphocytidyl-2C-methyl-D-erythritol. This is 4-diphosphocytidyl-2-C-methyl-D-erythritol kinase from Blochmanniella pennsylvanica (strain BPEN).